Consider the following 107-residue polypeptide: Ferredoxin-6 (107 aa).

A 2Fe-2S ferredoxin-type domain is found at 2–106 (AKIIFIEHNG…GLVVHLPEKQ (105 aa)). [2Fe-2S] cluster-binding residues include Cys40, Cys46, Cys49, and Cys87.

This sequence belongs to the adrenodoxin/putidaredoxin family. It depends on [2Fe-2S] cluster as a cofactor.

Functionally, ferredoxins are small electron carrier proteins that participate in various redox reactions. FdVI is an essential protein required for growth of R.capsulatus. May be involved in Fe-S cluster assembly. The sequence is that of Ferredoxin-6 from Rhodobacter capsulatus (Rhodopseudomonas capsulata).